The primary structure comprises 970 residues: uncharacterized protein (970 aa).

Residues 11–31 form a helical membrane-spanning segment; the sequence is WILKIGTILGLVCLGLFGVIF. The segment at 366–387 is disordered; that stretch reads ASNSNDNNNQNNNNNNNSSDVI. Residues 367-387 are compositionally biased toward low complexity; that stretch reads SNSNDNNNQNNNNNNNSSDVI. Transmembrane regions (helical) follow at residues 515 to 535, 537 to 557, 558 to 578, 614 to 634, 645 to 665, 726 to 746, 762 to 782, 789 to 809, 816 to 836, 877 to 897, and 903 to 923; these read FASS…LLTL, YKLL…SSLV, IFSA…FFVI, FFAN…VIYL, LMAI…IVLI, FLFV…LYLV, SNGI…YCLI, CLSY…VMYL, IDQS…FFAA, IESS…FGGI, and LVIF…AFLP.

It is found in the cell membrane. This is an uncharacterized protein from Mycoplasma genitalium (strain ATCC 33530 / DSM 19775 / NCTC 10195 / G37) (Mycoplasmoides genitalium).